We begin with the raw amino-acid sequence, 360 residues long: GTPase Obg (360 aa).

The 156-residue stretch at 1–156 (MFVDSVEIII…KCVRLELKLI (156 aa)) folds into the Obg domain. One can recognise an OBG-type G domain in the interval 157-360 (ADIGLVGFPN…LKFVLLKALP (204 aa)). Residues 163 to 170 (GFPNAGKS), 188 to 192 (FTTLV), 210 to 213 (DIPG), 279 to 282 (NKCD), and 341 to 343 (SAV) contribute to the GTP site. The Mg(2+) site is built by serine 170 and threonine 190.

Belongs to the TRAFAC class OBG-HflX-like GTPase superfamily. OBG GTPase family. Monomer. The cofactor is Mg(2+).

It is found in the cytoplasm. Its function is as follows. An essential GTPase which binds GTP, GDP and possibly (p)ppGpp with moderate affinity, with high nucleotide exchange rates and a fairly low GTP hydrolysis rate. Plays a role in control of the cell cycle, stress response, ribosome biogenesis and in those bacteria that undergo differentiation, in morphogenesis control. The polypeptide is GTPase Obg (Helicobacter pylori (strain G27)).